The primary structure comprises 100 residues: Integration host factor subunit alpha (100 aa).

This sequence belongs to the bacterial histone-like protein family. Heterodimer of an alpha and a beta chain.

Its function is as follows. This protein is one of the two subunits of integration host factor, a specific DNA-binding protein that functions in genetic recombination as well as in transcriptional and translational control. The sequence is that of Integration host factor subunit alpha from Buchnera aphidicola subsp. Schizaphis graminum (strain Sg).